We begin with the raw amino-acid sequence, 161 residues long: Spermidine N(1)-acetyltransferase (161 aa).

The 158-residue stretch at 3–160 (IEIRKLSIED…SDFIMEKKYE (158 aa)) folds into the N-acetyltransferase domain. Residues 92–94 (LYL), 99–104 (THKKIG), Asn131, and Ser136 contribute to the acetyl-CoA site. Tyr138 (proton donor) is an active-site residue. Lys140 contributes to the acetyl-CoA binding site.

Belongs to the acetyltransferase family. As to quaternary structure, monomer or homodimer.

The catalysed reaction is an alkane-alpha,omega-diamine + acetyl-CoA = an N-acetylalkane-alpha,omega-diamine + CoA + H(+). Functionally, involved in the protection against polyamine toxicity by regulating their concentration. Could also be involved in the negative control of sporulation as well as production of degradative enzymes such as alpha-amylase, levansucrase and alkaline phosphatase. Catalyzes the transfer of an acetyl group from acetyl coenzyme A (AcCoA) to an acceptor substrate and release both CoA and the acetylated product. It can use a variety of substrates including spermidine, L-tryptophan, L-leucine, L-lysine, dopamine and tyramine. The protein is Spermidine N(1)-acetyltransferase of Thermoplasma acidophilum (strain ATCC 25905 / DSM 1728 / JCM 9062 / NBRC 15155 / AMRC-C165).